Consider the following 346-residue polypeptide: Methylthioribose-1-phosphate isomerase (346 aa).

Substrate is bound by residues 47–49 (RGA), Arg88, and Gln195. The active-site Proton donor is the Asp236. 246–247 (NK) serves as a coordination point for substrate.

Belongs to the eIF-2B alpha/beta/delta subunits family. MtnA subfamily.

The enzyme catalyses 5-(methylsulfanyl)-alpha-D-ribose 1-phosphate = 5-(methylsulfanyl)-D-ribulose 1-phosphate. It participates in amino-acid biosynthesis; L-methionine biosynthesis via salvage pathway; L-methionine from S-methyl-5-thio-alpha-D-ribose 1-phosphate: step 1/6. In terms of biological role, catalyzes the interconversion of methylthioribose-1-phosphate (MTR-1-P) into methylthioribulose-1-phosphate (MTRu-1-P). The sequence is that of Methylthioribose-1-phosphate isomerase from Maridesulfovibrio salexigens (strain ATCC 14822 / DSM 2638 / NCIMB 8403 / VKM B-1763) (Desulfovibrio salexigens).